The primary structure comprises 395 residues: D-serine dehydratase (395 aa).

Residue K46 is modified to N6-(pyridoxal phosphate)lysine. 5 residues coordinate pyridoxal 5'-phosphate: Y184, Y191, T232, G254, and N255. The Zn(2+) site is built by H365 and C367.

Belongs to the DSD1 family. Pyridoxal 5'-phosphate serves as cofactor. Requires Zn(2+) as cofactor.

It catalyses the reaction D-serine = pyruvate + NH4(+). Catalyzes the conversion of D-serine to pyruvate and ammonia. Plays a role in D-serine detoxification. This chain is D-serine dehydratase, found in Dictyostelium discoideum (Social amoeba).